The chain runs to 471 residues: Tetratricopeptide repeat protein 29 (471 aa).

7 TPR repeats span residues 92–131, 136–173, 182–215, 234–267, 274–307, 314–347, and 354–387; these read DKLP…EAAE, YEEV…AQLI, AEAE…THGR, VRTY…AREG, GEAS…STSL, GRAY…ARNN, and IRAC…AMEL. Residues 449-471 form a disordered region; sequence ATEDNIYQLPDAEEETRRSPENQ.

In terms of tissue distribution, expressed in spermatozoa (at protein level).

It is found in the cytoplasm. Its subcellular location is the cytoskeleton. It localises to the flagellum axoneme. Its function is as follows. Axonemal protein which is implicated in axonemal and/or peri-axonemal structure assembly and regulates flagellum assembly and beating and therefore sperm motility. This Mus musculus (Mouse) protein is Tetratricopeptide repeat protein 29 (Ttc29).